The following is a 92-amino-acid chain: Small ribosomal subunit protein uS19 (92 aa).

The protein belongs to the universal ribosomal protein uS19 family.

Its function is as follows. Protein S19 forms a complex with S13 that binds strongly to the 16S ribosomal RNA. This is Small ribosomal subunit protein uS19 from Rhodospirillum rubrum (strain ATCC 11170 / ATH 1.1.1 / DSM 467 / LMG 4362 / NCIMB 8255 / S1).